Consider the following 240-residue polypeptide: Sugar fermentation stimulation protein homolog (240 aa).

This sequence belongs to the SfsA family.

This Saccharolobus solfataricus (strain ATCC 35092 / DSM 1617 / JCM 11322 / P2) (Sulfolobus solfataricus) protein is Sugar fermentation stimulation protein homolog.